We begin with the raw amino-acid sequence, 527 residues long: Proline--tRNA ligase (527 aa).

Belongs to the class-II aminoacyl-tRNA synthetase family. ProS type 3 subfamily. In terms of assembly, homodimer.

It is found in the cytoplasm. It carries out the reaction tRNA(Pro) + L-proline + ATP = L-prolyl-tRNA(Pro) + AMP + diphosphate. Functionally, catalyzes the attachment of proline to tRNA(Pro) in a two-step reaction: proline is first activated by ATP to form Pro-AMP and then transferred to the acceptor end of tRNA(Pro). In Sphingopyxis alaskensis (strain DSM 13593 / LMG 18877 / RB2256) (Sphingomonas alaskensis), this protein is Proline--tRNA ligase.